A 367-amino-acid chain; its full sequence is Phosphoribosylaminoimidazole-succinocarboxamide synthase (367 aa).

The protein belongs to the SAICAR synthetase family.

The enzyme catalyses 5-amino-1-(5-phospho-D-ribosyl)imidazole-4-carboxylate + L-aspartate + ATP = (2S)-2-[5-amino-1-(5-phospho-beta-D-ribosyl)imidazole-4-carboxamido]succinate + ADP + phosphate + 2 H(+). The protein operates within purine metabolism; IMP biosynthesis via de novo pathway; 5-amino-1-(5-phospho-D-ribosyl)imidazole-4-carboxamide from 5-amino-1-(5-phospho-D-ribosyl)imidazole-4-carboxylate: step 1/2. This is Phosphoribosylaminoimidazole-succinocarboxamide synthase from Shewanella frigidimarina (strain NCIMB 400).